Here is a 68-residue protein sequence, read N- to C-terminus: UPF0435 protein SAOUHSC_02093 (68 aa).

It belongs to the UPF0435 family.

This chain is UPF0435 protein SAOUHSC_02093, found in Staphylococcus aureus (strain NCTC 8325 / PS 47).